The primary structure comprises 213 residues: Membrane-spanning 4-domains subfamily A member 3 (213 aa).

Residues 1–26 are Cytoplasmic-facing; that stretch reads MKPEETGGSVYQPLDESRHVQRGVLQ. The helical transmembrane segment at 27 to 47 threads the bilayer; that stretch reads ALGAIQILNGILILALGIFLV. The Extracellular segment spans residues 48-58; sequence CLQHVSHHFRH. A helical transmembrane segment spans residues 59-79; sequence FFFFTFYTGYPLWGAVFFISS. Over 80-97 the chain is Cytoplasmic; that stretch reads GSLTVAAGRNPTRMLMQN. Residues 98–118 form a helical membrane-spanning segment; it reads SFGINIASTTIAFVGTVFLSV. The Extracellular portion of the chain corresponds to 119-148; it reads HLAFNTQAFKGCQSSPSPDVCISLGSSSDG. The chain crosses the membrane as a helical span at residues 149–169; it reads LVSLMLILTLLELSVTISISA. Residues 170-213 are Cytoplasmic-facing; it reads MWCLGNVCGLREAITSPPNSVESGILPEGSDSENLNTQPQASEE. The interval 189-213 is disordered; that stretch reads SVESGILPEGSDSENLNTQPQASEE. A compositionally biased stretch (polar residues) spans 201 to 213; that stretch reads SENLNTQPQASEE.

This sequence belongs to the MS4A family. In terms of assembly, interacts with CDKN3. Interacts with CDKN3-CDK2 complexes through its binding to CDKN3; this interaction facilitates dissociation of cyclin A from CDKN3-CDK2 complexes. In terms of tissue distribution, expressed at low levels only in specific immune tissues, such as, spleen, bone marrow and peripheral blood leukocytes.

The protein resides in the membrane. Functionally, hematopoietic modulator for the G1-S cell cycle transition. Modulates the level of phosphorylation of cyclin-dependent kinase 2 (CDK2) through its direct binding to cyclin-dependent kinase inhibitor 3 (CDKN3/KAP). The chain is Membrane-spanning 4-domains subfamily A member 3 (Ms4a3) from Mus musculus (Mouse).